Here is a 239-residue protein sequence, read N- to C-terminus: Lipoprotein-releasing system ATP-binding protein LolD (239 aa).

In terms of domain architecture, ABC transporter spans 14-239 (IRAERLGKTY…KLRELAPSAV (226 aa)). 50–57 (GASGAGKS) serves as a coordination point for ATP.

It belongs to the ABC transporter superfamily. Lipoprotein translocase (TC 3.A.1.125) family. In terms of assembly, the complex is composed of two ATP-binding proteins (LolD) and two transmembrane proteins (LolC and LolE).

The protein localises to the cell inner membrane. Part of the ABC transporter complex LolCDE involved in the translocation of mature outer membrane-directed lipoproteins, from the inner membrane to the periplasmic chaperone, LolA. Responsible for the formation of the LolA-lipoprotein complex in an ATP-dependent manner. The protein is Lipoprotein-releasing system ATP-binding protein LolD of Xanthomonas campestris pv. campestris (strain 8004).